A 707-amino-acid polypeptide reads, in one-letter code: Zinc finger protein 60 (707 aa).

In terms of domain architecture, KRAB spans 14–86; it reads VTFRDVAVDF…VKKETGRPSQ (73 aa). 19 consecutive C2H2-type zinc fingers follow at residues 173 to 195, 201 to 223, 229 to 251, 257 to 282, 288 to 310, 316 to 338, 344 to 366, 372 to 394, 400 to 422, 428 to 450, 456 to 478, 484 to 506, 512 to 534, 540 to 562, 568 to 590, 596 to 618, 624 to 646, 652 to 674, and 680 to 702; these read YKCK…ESIH, YECK…QKSH, FECN…KNIH, FECE…RTIH, YKCN…QKIH, FHCK…ENIH, FECK…YDTH, FECN…QKTH, FKCK…QRIH, YQCK…QSIH, FECK…QRFH, FECK…KTSH, FECK…RIIH, YKCN…EKIH, FECK…QTIH, YECE…QRIH, FQCK…ERIH, FQCK…FRIH, and YECS…QSIH.

It belongs to the krueppel C2H2-type zinc-finger protein family. Expressed widely and evenly in most adult mouse tissues.

It localises to the nucleus. Functionally, may have a role during differentiation processes. This chain is Zinc finger protein 60 (Zfp60), found in Mus musculus (Mouse).